We begin with the raw amino-acid sequence, 475 residues long: Transmembrane protein 181 (475 aa).

9 helical membrane-spanning segments follow: residues His16–Ile36, Glu131–Phe151, Leu175–Ala195, Ser214–Val234, Leu245–Ile265, Phe276–Ile296, Met320–Val340, Leu356–Leu376, and Phe401–Pro421. Ser443 carries the phosphoserine modification.

The protein belongs to the TMEM181 family. In terms of assembly, interacts with cytolethal distending toxin.

It localises to the membrane. Its function is as follows. Mediates action of cytolethal distending toxins (CDT), which are secreted by many pathogenic bacteria. Expression level of TMEM181 is rate-limiting for intoxication. This chain is Transmembrane protein 181 (TMEM181), found in Homo sapiens (Human).